Reading from the N-terminus, the 374-residue chain is Isocitrate dehydrogenase [NAD] catalytic subunit 5, mitochondrial (374 aa).

A mitochondrion-targeting transit peptide spans methionine 1–isoleucine 44. Positions 127, 137, 158, and 245 each coordinate substrate. Positions 245, 269, and 273 each coordinate Mg(2+).

It belongs to the isocitrate and isopropylmalate dehydrogenases family. As to quaternary structure, heterooligomer of catalytic and regulatory subunits. Mg(2+) is required as a cofactor. Requires Mn(2+) as cofactor. As to expression, ubiquitous.

Its subcellular location is the mitochondrion. The enzyme catalyses D-threo-isocitrate + NAD(+) = 2-oxoglutarate + CO2 + NADH. Performs an essential role in the oxidative function of the citric acid cycle. This is Isocitrate dehydrogenase [NAD] catalytic subunit 5, mitochondrial (IDH5) from Arabidopsis thaliana (Mouse-ear cress).